Consider the following 137-residue polypeptide: Lysozyme (137 aa).

Positions 1-18 (MQKLIIFALVVLCVGSEA) are cleaved as a signal peptide. In terms of domain architecture, C-type lysozyme spans 19 to 137 (KTFTRCGLVH…QGSLPDISSC (119 aa)). 4 disulfides stabilise this stretch: C24/C137, C45/C127, C79/C93, and C89/C107. Residues E50 and D67 contribute to the active site.

The protein belongs to the glycosyl hydrolase 22 family.

It carries out the reaction Hydrolysis of (1-&gt;4)-beta-linkages between N-acetylmuramic acid and N-acetyl-D-glucosamine residues in a peptidoglycan and between N-acetyl-D-glucosamine residues in chitodextrins.. Functionally, lysozymes have primarily a bacteriolytic function; those in tissues and body fluids are associated with the monocyte-macrophage system and enhance the activity of immunoagents. Active against E.coli and M.luteus. This Bombyx mori (Silk moth) protein is Lysozyme.